The primary structure comprises 342 residues: tRNA N6-adenosine threonylcarbamoyltransferase (342 aa).

H114 and H118 together coordinate Fe cation. Residues 136–140, D169, G182, D186, and N275 contribute to the substrate site; that span reads LVSGG. D301 provides a ligand contact to Fe cation.

Belongs to the KAE1 / TsaD family. The cofactor is Fe(2+).

The protein localises to the cytoplasm. The catalysed reaction is L-threonylcarbamoyladenylate + adenosine(37) in tRNA = N(6)-L-threonylcarbamoyladenosine(37) in tRNA + AMP + H(+). Its function is as follows. Required for the formation of a threonylcarbamoyl group on adenosine at position 37 (t(6)A37) in tRNAs that read codons beginning with adenine. Is involved in the transfer of the threonylcarbamoyl moiety of threonylcarbamoyl-AMP (TC-AMP) to the N6 group of A37, together with TsaE and TsaB. TsaD likely plays a direct catalytic role in this reaction. In Streptococcus pyogenes serotype M3 (strain ATCC BAA-595 / MGAS315), this protein is tRNA N6-adenosine threonylcarbamoyltransferase.